Here is a 146-residue protein sequence, read N- to C-terminus: Antirestriction protein KlcA (146 aa).

This sequence belongs to the antirestriction protein family.

Could be involved in overcoming restriction barriers during establishment after conjugative transfer. The chain is Antirestriction protein KlcA (klcA) from Escherichia coli.